Here is a 249-residue protein sequence, read N- to C-terminus: uncharacterized protein (249 aa).

A helical membrane pass occupies residues 3–23; that stretch reads WYWIGLLIVVVLFLLSAVRIV.

Belongs to the band 7/mec-2 family.

It localises to the membrane. This is an uncharacterized protein from Archaeoglobus fulgidus (strain ATCC 49558 / DSM 4304 / JCM 9628 / NBRC 100126 / VC-16).